The sequence spans 377 residues: Protein RecA (377 aa).

Residue 65 to 72 participates in ATP binding; that stretch reads GPESSGKT. The disordered stretch occupies residues 329-377; sequence GDEEAAATKATETKTDAPKDKDKGKTKAKDKPADVTPGQIELAPDKSAK. Residues 339–361 show a composition bias toward basic and acidic residues; the sequence is TETKTDAPKDKDKGKTKAKDKPA.

Belongs to the RecA family.

Its subcellular location is the cytoplasm. In terms of biological role, can catalyze the hydrolysis of ATP in the presence of single-stranded DNA, the ATP-dependent uptake of single-stranded DNA by duplex DNA, and the ATP-dependent hybridization of homologous single-stranded DNAs. It interacts with LexA causing its activation and leading to its autocatalytic cleavage. The polypeptide is Protein RecA (Levilactobacillus brevis (strain ATCC 367 / BCRC 12310 / CIP 105137 / JCM 1170 / LMG 11437 / NCIMB 947 / NCTC 947) (Lactobacillus brevis)).